The sequence spans 435 residues: MNIERADFVDRVKIFVKAGDGGNGCVSFRREKYVPKGGPDGGDGGNGGFVFLRANPSVSTLIEFVNKRKFMAENGKHGMGKKMKGRNGKDLFIDVPVGTVVKDAVTGEVIADLNEPGKIVCVARGGRGGRGNAHFATSIKQAPLIAERGEKGESRWLELELKILADVGLVGYPNVGKSSLISRISNARPKIANYPFTTLIPNLGVVKYDDFSFVVADIPGLIEGASEGVGLGNVFLRHVERCYLIAHVIDVSGYEREDPVRDYFVIREEMKKYSPFLLEKPEIVVANKIDLIGKEELEKILKRLRDATNREVIPVSAVTGEGIDLLVSKLASIVREMKVEKPERKEEKFVKPSPVWRRLPEKFHLEVVKEDEGYWVVEGENLRVWIERFDLNQRDARLMLLQVLEKNGLNNKLKEAGVKEGDVVRIGDFEFEYRE.

Residues 6 to 164 (ADFVDRVKIF…RWLELELKIL (159 aa)) enclose the Obg domain. One can recognise an OBG-type G domain in the interval 165 to 335 (ADVGLVGYPN…LVSKLASIVR (171 aa)). GTP is bound by residues 171–178 (GYPNVGKS), 196–200 (FTTLI), 217–220 (DIPG), 287–290 (NKID), and 316–318 (SAV). Serine 178 and threonine 198 together coordinate Mg(2+). An OCT domain is found at 357–435 (RRLPEKFHLE…IGDFEFEYRE (79 aa)).

Belongs to the TRAFAC class OBG-HflX-like GTPase superfamily. OBG GTPase family. As to quaternary structure, monomer. Requires Mg(2+) as cofactor.

The protein resides in the cytoplasm. Its function is as follows. An essential GTPase which binds GTP, GDP and possibly (p)ppGpp with moderate affinity, with high nucleotide exchange rates and a fairly low GTP hydrolysis rate. Plays a role in control of the cell cycle, stress response, ribosome biogenesis and in those bacteria that undergo differentiation, in morphogenesis control. The protein is GTPase Obg of Thermotoga maritima (strain ATCC 43589 / DSM 3109 / JCM 10099 / NBRC 100826 / MSB8).